A 502-amino-acid polypeptide reads, in one-letter code: Sodium/proline symporter (502 aa).

13 helical membrane-spanning segments follow: residues 6–26 (PMLVTFCVYIFGMILIGFIAW), 42–62 (LGPFVTALSAGASDMSGWLLM), 68–88 (IFLSGISESWIAIGLTLGAWI), 127–147 (IISALVILLFFTIYCASGIVA), 163–183 (ALWAGAAATIIYTFIGGFLAV), 192–212 (SLMIFALILTPVMVIVGVGGF), 235–255 (FVAIISLMGWGLGYFGQPHIL), 276–296 (TWMILCLAGAVAVGFFGIAYF), 320–340 (ILFNPWIAGVLLSAILAAVMS), 371–391 (LVWVGRVMVLVVALIAIALAA), 398–418 (LGLVSYAWAGFGAAFGPVVLF), 430–450 (ALAGMIIGAVTVIVWKQYGWL), and 452–472 (LYEIIPGFIFGSLGIVIFSLL).

Belongs to the sodium:solute symporter (SSF) (TC 2.A.21) family.

Its subcellular location is the cell inner membrane. It carries out the reaction L-proline(in) + Na(+)(in) = L-proline(out) + Na(+)(out). Functionally, catalyzes the sodium-dependent uptake of extracellular L-proline. The protein is Sodium/proline symporter of Salmonella typhimurium (strain LT2 / SGSC1412 / ATCC 700720).